A 284-amino-acid chain; its full sequence is Putative L-ribulose-5-phosphate 3-epimerase UlaE (284 aa).

It belongs to the L-ribulose-5-phosphate 3-epimerase family.

The catalysed reaction is L-ribulose 5-phosphate = L-xylulose 5-phosphate. It participates in cofactor degradation; L-ascorbate degradation; D-xylulose 5-phosphate from L-ascorbate: step 3/4. Its function is as follows. Catalyzes the isomerization of L-xylulose-5-phosphate to L-ribulose-5-phosphate. Is involved in the anaerobic L-ascorbate utilization. This is Putative L-ribulose-5-phosphate 3-epimerase UlaE from Shigella dysenteriae serotype 1 (strain Sd197).